The chain runs to 432 residues: Repulsive guidance molecule A (432 aa).

A signal peptide spans 1–29; that stretch reads MGRGAGSTALGLFQILPVFLCIFPPVTSP. The propeptide at 30-149 is removed in mature form; that stretch reads CKILKCNSEF…NYTHCGLFGD (120 aa). N-linked (GlcNAc...) asparagine glycosylation occurs at asparagine 96. Residues 99-122 are disordered; the sequence is KDGPTSQPRLRTLPPGDSQERSDS. 2 disulfide bridges follow: cysteine 126–cysteine 207 and cysteine 144–cysteine 296. Asparagine 140 is a glycosylation site (N-linked (GlcNAc...) asparagine). The GPI-anchor amidated asparagine moiety is linked to residue asparagine 404. A propeptide spans 405–432 (removed in mature form); sequence AAPSEHPWALPALWVALLSLSQCWLGLL.

This sequence belongs to the repulsive guidance molecule (RGM) family. Autocatalytically cleaved at low pH; the two chains remain linked via two disulfide bonds.

It localises to the cell membrane. Its function is as follows. Acts as an axon-specific repulsive guidance molecule in the retinotectal system. Repulsive for a subset of axons of the temporal half of the retina. Provides thus positional information for the temporal axons invading the optic tectum in the stratum opticum. The polypeptide is Repulsive guidance molecule A (RGMA) (Gallus gallus (Chicken)).